A 588-amino-acid chain; its full sequence is Phosphomethylpyrimidine synthase (588 aa).

Residues asparagine 212, methionine 241, tyrosine 270, histidine 306, 326–328, 367–370, and glutamate 406 contribute to the substrate site; these read SRG and DGLR. A Zn(2+)-binding site is contributed by histidine 410. Tyrosine 433 is a substrate binding site. Histidine 474 is a binding site for Zn(2+). [4Fe-4S] cluster contacts are provided by cysteine 554, cysteine 557, and cysteine 562.

It belongs to the ThiC family. Homodimer. [4Fe-4S] cluster is required as a cofactor.

The enzyme catalyses 5-amino-1-(5-phospho-beta-D-ribosyl)imidazole + S-adenosyl-L-methionine = 4-amino-2-methyl-5-(phosphooxymethyl)pyrimidine + CO + 5'-deoxyadenosine + formate + L-methionine + 3 H(+). The protein operates within cofactor biosynthesis; thiamine diphosphate biosynthesis. In terms of biological role, catalyzes the synthesis of the hydroxymethylpyrimidine phosphate (HMP-P) moiety of thiamine from aminoimidazole ribotide (AIR) in a radical S-adenosyl-L-methionine (SAM)-dependent reaction. This Bartonella quintana (strain Toulouse) (Rochalimaea quintana) protein is Phosphomethylpyrimidine synthase.